We begin with the raw amino-acid sequence, 302 residues long: Putative beta-glucosidase 17 (302 aa).

An N-terminal signal peptide occupies residues 1-27 (MMAVAAATRIAVVVVAALAALAPGARG). A beta-D-glucoside-binding positions include Gln47, His149, and 194 to 195 (NE). Catalysis depends on Glu195, which acts as the Proton donor. A disulfide bond links Cys214 and Cys221. N-linked (GlcNAc...) asparagine glycosylation occurs at Asn274.

The protein belongs to the glycosyl hydrolase 1 family.

The enzyme catalyses Hydrolysis of terminal, non-reducing beta-D-glucosyl residues with release of beta-D-glucose.. The chain is Putative beta-glucosidase 17 (BGLU17) from Oryza sativa subsp. japonica (Rice).